A 256-amino-acid polypeptide reads, in one-letter code: Zinc import ATP-binding protein ZnuC (256 aa).

Residues 6–221 (IAAEGLSIRV…PEYRALFGTG (216 aa)) enclose the ABC transporter domain. An ATP-binding site is contributed by 38–45 (GPNGSGKS). The disordered stretch occupies residues 237–256 (HDDDCGHDHGAEHMHPHGDR).

This sequence belongs to the ABC transporter superfamily. Zinc importer (TC 3.A.1.15.5) family. In terms of assembly, the complex is composed of two ATP-binding proteins (ZnuC), two transmembrane proteins (ZnuB) and a solute-binding protein (ZnuA).

Its subcellular location is the cell inner membrane. The catalysed reaction is Zn(2+)(out) + ATP(in) + H2O(in) = Zn(2+)(in) + ADP(in) + phosphate(in) + H(+)(in). Part of the ABC transporter complex ZnuABC involved in zinc import. Responsible for energy coupling to the transport system. The sequence is that of Zinc import ATP-binding protein ZnuC from Ruegeria pomeroyi (strain ATCC 700808 / DSM 15171 / DSS-3) (Silicibacter pomeroyi).